Reading from the N-terminus, the 675-residue chain is L-type lectin-domain containing receptor kinase IX.2 (675 aa).

The signal sequence occupies residues 1 to 35 (MLYFIFCQNLSSSSSMSNSILFLSLFLFLPFVVDS). 8 N-linked (GlcNAc...) asparagine glycosylation sites follow: asparagine 9, asparagine 39, asparagine 110, asparagine 146, asparagine 179, asparagine 186, asparagine 191, and asparagine 212. The legume-lectin like stretch occupies residues 36 to 269 (LYFNFTSFRQ…EEHRLLSWEL (234 aa)). Residues 36–281 (LYFNFTSFRQ…SLDSDKADSR (246 aa)) lie on the Extracellular side of the membrane. A helical membrane pass occupies residues 282-302 (IGLVIGISASGFVFLTFMVIT). Residues 303–675 (TVVVWSRKQR…VTFSGIEYGR (373 aa)) are Cytoplasmic-facing. The Protein kinase domain occupies 350 to 631 (FSSHRKLGEG…KQGIQVMNFE (282 aa)). ATP-binding positions include 356-364 (LGEGGFGAV) and lysine 379. Aspartate 475 acts as the Proton acceptor in catalysis.

In the C-terminal section; belongs to the protein kinase superfamily. Ser/Thr protein kinase family. It in the N-terminal section; belongs to the leguminous lectin family. As to quaternary structure, interacts with ABCG40.

It localises to the cell membrane. It catalyses the reaction L-seryl-[protein] + ATP = O-phospho-L-seryl-[protein] + ADP + H(+). The catalysed reaction is L-threonyl-[protein] + ATP = O-phospho-L-threonyl-[protein] + ADP + H(+). Functionally, promotes hydrogen peroxide H(2)O(2) production and cell death. Its function is as follows. Involved in resistance response to the pathogenic oomycetes Phytophthora infestans and Phytophthora capsici. The sequence is that of L-type lectin-domain containing receptor kinase IX.2 from Arabidopsis thaliana (Mouse-ear cress).